We begin with the raw amino-acid sequence, 69 residues long: Trypsin/subtilisin inhibitor (69 aa).

C4 and C49 are disulfide-bonded.

Belongs to the protease inhibitor I13 (potato type I serine protease inhibitor) family.

Functionally, inhibitor of trypsin, chymotrypsin, subtilisin, etc. In Amaranthus caudatus (Love-lies-bleeding), this protein is Trypsin/subtilisin inhibitor.